A 508-amino-acid polypeptide reads, in one-letter code: Maturase K (508 aa).

The protein belongs to the intron maturase 2 family. MatK subfamily.

The protein localises to the plastid. Its subcellular location is the chloroplast. Functionally, usually encoded in the trnK tRNA gene intron. Probably assists in splicing its own and other chloroplast group II introns. This is Maturase K from Collinsia heterophylla (Purple Chinese houses).